An 88-amino-acid chain; its full sequence is Acyl-CoA-binding domain-containing protein 7 (88 aa).

An ACB domain is found at 3–88 (LQADFDKAAK…AKELIEKYGI (86 aa)). Residues R15, 30–34 (YGLYK), K56, and Y75 contribute to the an acyl-CoA site.

The protein belongs to the ACBD7 family.

Binds medium- and long-chain acyl-CoA esters. This is Acyl-CoA-binding domain-containing protein 7 (ACBD7) from Bos taurus (Bovine).